Here is a 20-residue protein sequence, read N- to C-terminus: Unknown protein from 2D-PAGE (20 aa).

The protein is Unknown protein from 2D-PAGE of Nicotiana tabacum (Common tobacco).